The primary structure comprises 868 residues: MRVHYLWLLLILGHVASARYSSANDWTVDHPQTLFAWEGACIRIPCKYKTPLPKARLDNILLFQNYEFDKATKKFTGTVLYNATKTEKDPESELYLSKQGRVTFLGNRIDNCTLKIHPIRANDSGNLGLRMTAGTERWMEPIHLNVSEKPFQPYIQMPSEIRESQSVTLTCGLNFSCFGYDILLKWFLEDSEITSITSSVTSITSSVTSSIKNVYTESKLTFQPKWTDHGKSVKCQVQHSSKVLSERTVRLDVKYTPKLEIKVNPTEVEKNNSVTMTCRVNSSNPKLRTVAVSWFKDGRPLEDQELEQEQQMSKLILHSVTKDMRGKYRCQASNDIGPGESEEVELTVHYAPEPSRVHIYPSPAEEGQSVELICESLASPSATNYTWYHNRKPIPGDTQEKLRIPKVSPWHAGNYSCLAENRLGHGKIDQEAKLDVHYAPKAVTTVIQSFTPILEGDSVTLVCRYNSSNPDVTSYRWNPQGSGSVLKPGVLRIQKVTWDSMPVSCAACNHKCSWALPVILNVHYAPRDVKVLKVSPASEIRAGQRVLLQCDFAESNPAEVRFFWKKNGSLVQEGRYLSFGSVSPEDSGNYNCMVNNSIGETLSQAWNLQVLYAPRRLRVSISPGDHVMEGKKATLSCESDANPPISQYTWFDSSGQDLHSSGQKLRLEPLEVQHTGSYRCKGTNGIGTGESPPSTLTVYYSPETIGKRVALGLGFCLTICILAIWGMKIQKKWKQNRSQQGLQENSSGQSFFVRNKKARRTPLSEGPQSQGCYNPAMDDTVSYAILRFPESDTHNTGDAGTPATQAPPPNNSDSVTYSVIQKRPMGDYENVNPSCPEDESIHYSELVQFGAGKRPQAKEDVDYVTLKH.

Residues 1–21 (MRVHYLWLLLILGHVASARYS) form the signal peptide. The Ig-like V-type domain occupies 22 to 148 (SANDWTVDHP…MEPIHLNVSE (127 aa)). At 22 to 708 (SANDWTVDHP…YYSPETIGKR (687 aa)) the chain is on the extracellular side. 3 disulfides stabilise this stretch: Cys-41/Cys-177, Cys-46/Cys-112, and Cys-171/Cys-235. Residues Asn-111 and Asn-122 are each glycosylated (N-linked (GlcNAc...) asparagine). Arg-130 is a binding site for N-acetylneuraminate. Residues Asn-145, Asn-174, Asn-271, Asn-281, Asn-384, Asn-414, Asn-466, Asn-567, and Asn-595 are each glycosylated (N-linked (GlcNAc...) asparagine). Ig-like C2-type domains follow at residues 153 to 250 (PYIQ…RTVR), 257 to 347 (PKLE…VELT), 352 to 435 (PEPS…AKLD), 440 to 521 (PKAV…VILN), 526 to 603 (PRDV…ETLS), and 614 to 697 (PRRL…STLT). Cystine bridges form between Cys-278-Cys-330, Cys-374-Cys-417, Cys-463-Cys-505, and Cys-550-Cys-592. Residues Cys-637 and Cys-680 are joined by a disulfide bond. The helical transmembrane segment at 709–727 (VALGLGFCLTICILAIWGM) threads the bilayer. Over 728 to 868 (KIQKKWKQNR…EDVDYVTLKH (141 aa)) the chain is Cytoplasmic. A compositionally biased stretch (polar residues) spans 738–752 (SQQGLQENSSGQSFF). The disordered stretch occupies residues 738-772 (SQQGLQENSSGQSFFVRNKKARRTPLSEGPQSQGC). Phosphoserine occurs at positions 746, 747, and 750. Residues 781–786 (VSYAIL) carry the ITIM motif 1 motif. The residue at position 783 (Tyr-783) is a Phosphotyrosine. The segment at 790-812 (ESDTHNTGDAGTPATQAPPPNNS) is disordered. Residues Tyr-828, Tyr-843, and Tyr-863 each carry the phosphotyrosine modification. Short sequence motifs (ITIM motif) lie at residues 841–846 (IHYSEL) and 861–866 (VDYVTL).

This sequence belongs to the immunoglobulin superfamily. SIGLEC (sialic acid binding Ig-like lectin) family. Predominantly monomer of isoform CD22-beta. Also found as heterodimer of isoform CD22-beta and a shorter isoform. Interacts with PTPN6/SHP-1, LYN, SYK, PIK3R1/PIK3R2 and PLCG1 upon phosphorylation. Interacts with GRB2, INPP5D and SHC1 upon phosphorylation. May form a complex with INPP5D/SHIP, GRB2 and SHC1. Phosphorylated on tyrosine residues by LYN. In terms of processing, phosphorylation of Tyr-783 and Tyr-843 are involved in binding to SYK. Phosphorylation of Tyr-828 is involved in binding to GRB2. Phosphorylation of Tyr-863 is involved in binding to SYK, PLCG2 and PIK3R1/PIK3R2. In terms of tissue distribution, B-lymphocytes.

It is found in the cell membrane. In terms of biological role, most highly expressed siglec (sialic acid-binding immunoglobulin-like lectin) on B-cells that plays a role in various aspects of B-cell biology including differentiation, antigen presentation, and trafficking to bone marrow. Binds to alpha 2,6-linked sialic acid residues of surface molecules such as CD22 itself, CD45 and IgM in a cis configuration. Can also bind to ligands on other cells as an adhesion molecule in a trans configuration. Acts as an inhibitory coreceptor on the surface of B-cells and inhibits B-cell receptor induced signaling, characterized by inhibition of the calcium mobilization and cellular activation. Mechanistically, the immunoreceptor tyrosine-based inhibitory motif domain is phosphorylated by the Src kinase LYN, which in turn leads to the recruitment of the protein tyrosine phosphatase 1/PTPN6, leading to the negative regulation of BCR signaling. If this negative signaling from is of sufficient strength, apoptosis of the B-cell can be induced. The polypeptide is B-cell receptor CD22 (Mus musculus (Mouse)).